A 334-amino-acid chain; its full sequence is Beta-ketoacyl-[acyl-carrier-protein] synthase III (334 aa).

Catalysis depends on residues C114 and H253. Residues 254–258 are ACP-binding; it reads QANIR. N283 is an active-site residue.

Belongs to the thiolase-like superfamily. FabH family. In terms of assembly, homodimer.

The protein resides in the cytoplasm. It catalyses the reaction malonyl-[ACP] + acetyl-CoA + H(+) = 3-oxobutanoyl-[ACP] + CO2 + CoA. It participates in lipid metabolism; fatty acid biosynthesis. In terms of biological role, catalyzes the condensation reaction of fatty acid synthesis by the addition to an acyl acceptor of two carbons from malonyl-ACP. Catalyzes the first condensation reaction which initiates fatty acid synthesis and may therefore play a role in governing the total rate of fatty acid production. Possesses both acetoacetyl-ACP synthase and acetyl transacylase activities. Its substrate specificity determines the biosynthesis of branched-chain and/or straight-chain of fatty acids. This Campylobacter curvus (strain 525.92) protein is Beta-ketoacyl-[acyl-carrier-protein] synthase III.